The following is a 78-amino-acid chain: Acyl carrier protein (78 aa).

The Carrier domain occupies 2-77 (STIEERVKKI…AAIDFIQANQ (76 aa)). Residue Ser37 is modified to O-(pantetheine 4'-phosphoryl)serine.

It belongs to the acyl carrier protein (ACP) family. 4'-phosphopantetheine is transferred from CoA to a specific serine of apo-ACP by AcpS. This modification is essential for activity because fatty acids are bound in thioester linkage to the sulfhydryl of the prosthetic group.

Its subcellular location is the cytoplasm. The protein operates within lipid metabolism; fatty acid biosynthesis. Carrier of the growing fatty acid chain in fatty acid biosynthesis. This chain is Acyl carrier protein, found in Pectobacterium atrosepticum (strain SCRI 1043 / ATCC BAA-672) (Erwinia carotovora subsp. atroseptica).